Reading from the N-terminus, the 332-residue chain is L-lactate dehydrogenase C chain (332 aa).

The residue at position 2 (Ser-2) is a Blocked amino end (Ser). NAD(+) is bound by residues 29 to 57 (GNVG…DENK) and Arg-99. Positions 106, 138, and 169 each coordinate substrate. Asn-138 contributes to the NAD(+) binding site. His-193 acts as the Proton acceptor in catalysis. Substrate is bound at residue Thr-248.

Belongs to the LDH/MDH superfamily. LDH family. In terms of assembly, homotetramer. Interacts with RABL2/RABL2A; binds preferentially to GTP-bound RABL2.

It is found in the cytoplasm. It carries out the reaction (S)-lactate + NAD(+) = pyruvate + NADH + H(+). Its pathway is fermentation; pyruvate fermentation to lactate; (S)-lactate from pyruvate: step 1/1. Functionally, possible role in sperm motility. The sequence is that of L-lactate dehydrogenase C chain (Ldhc) from Rattus norvegicus (Rat).